The following is a 142-amino-acid chain: Large ribosomal subunit protein uL11 (142 aa).

It belongs to the universal ribosomal protein uL11 family. Part of the ribosomal stalk of the 50S ribosomal subunit. Interacts with L10 and the large rRNA to form the base of the stalk. L10 forms an elongated spine to which L12 dimers bind in a sequential fashion forming a multimeric L10(L12)X complex. In terms of processing, one or more lysine residues are methylated.

Forms part of the ribosomal stalk which helps the ribosome interact with GTP-bound translation factors. This is Large ribosomal subunit protein uL11 from Nitrobacter winogradskyi (strain ATCC 25391 / DSM 10237 / CIP 104748 / NCIMB 11846 / Nb-255).